The primary structure comprises 364 residues: Cobalt-precorrin-5B C(1)-methyltransferase (364 aa).

This sequence belongs to the CbiD family.

It carries out the reaction Co-precorrin-5B + S-adenosyl-L-methionine = Co-precorrin-6A + S-adenosyl-L-homocysteine. Its pathway is cofactor biosynthesis; adenosylcobalamin biosynthesis; cob(II)yrinate a,c-diamide from sirohydrochlorin (anaerobic route): step 6/10. In terms of biological role, catalyzes the methylation of C-1 in cobalt-precorrin-5B to form cobalt-precorrin-6A. The sequence is that of Cobalt-precorrin-5B C(1)-methyltransferase from Pseudomonas putida (strain GB-1).